A 220-amino-acid chain; its full sequence is Small ribosomal subunit protein mS23 (220 aa).

It belongs to the mitochondrion-specific ribosomal protein mS23 family. Component of the mitochondrial small ribosomal subunit (mt-SSU). Mature yeast 74S mitochondrial ribosomes consist of a small (37S) and a large (54S) subunit. The 37S small subunit contains a 15S ribosomal RNA (15S mt-rRNA) and at least 32 different proteins. The 54S large subunit contains a 21S rRNA (21S mt-rRNA) and at least 45 different proteins.

The protein resides in the mitochondrion. In terms of biological role, component of the mitochondrial ribosome (mitoribosome), a dedicated translation machinery responsible for the synthesis of mitochondrial genome-encoded proteins, including at least some of the essential transmembrane subunits of the mitochondrial respiratory chain. The mitoribosomes are attached to the mitochondrial inner membrane and translation products are cotranslationally integrated into the membrane. This is Small ribosomal subunit protein mS23 (rsm25) from Schizosaccharomyces pombe (strain 972 / ATCC 24843) (Fission yeast).